A 287-amino-acid chain; its full sequence is Diaminopimelate epimerase (287 aa).

Substrate contacts are provided by Asn15 and Asn66. Catalysis depends on Cys75, which acts as the Proton donor. Substrate is bound by residues 76–77, Asn170, Asn203, and 221–222; these read GN and ER. Cys230 functions as the Proton acceptor in the catalytic mechanism. A substrate-binding site is contributed by 231–232; it reads GT.

The protein belongs to the diaminopimelate epimerase family. Homodimer.

The protein resides in the cytoplasm. It catalyses the reaction (2S,6S)-2,6-diaminopimelate = meso-2,6-diaminopimelate. The protein operates within amino-acid biosynthesis; L-lysine biosynthesis via DAP pathway; DL-2,6-diaminopimelate from LL-2,6-diaminopimelate: step 1/1. Catalyzes the stereoinversion of LL-2,6-diaminopimelate (L,L-DAP) to meso-diaminopimelate (meso-DAP), a precursor of L-lysine and an essential component of the bacterial peptidoglycan. This is Diaminopimelate epimerase from Desulfovibrio desulfuricans (strain ATCC 27774 / DSM 6949 / MB).